Reading from the N-terminus, the 361-residue chain is Peptide chain release factor 1 (361 aa).

Glutamine 237 carries the post-translational modification N5-methylglutamine. A disordered region spans residues 286–306; it reads AKQDQEQAAKRKSLVGSGDRS.

This sequence belongs to the prokaryotic/mitochondrial release factor family. In terms of processing, methylated by PrmC. Methylation increases the termination efficiency of RF1.

It localises to the cytoplasm. Its function is as follows. Peptide chain release factor 1 directs the termination of translation in response to the peptide chain termination codons UAG and UAA. The sequence is that of Peptide chain release factor 1 from Coxiella burnetii (strain CbuG_Q212) (Coxiella burnetii (strain Q212)).